A 91-amino-acid chain; its full sequence is Cell division protein FtsB (91 aa).

The Cytoplasmic portion of the chain corresponds to 1 to 3 (MRW). The helical transmembrane segment at 4–21 (PLIVLAVLVIVLQYPLWL) threads the bilayer. At 22 to 91 (GKGGWLRVWD…EIFVHTPRKP (70 aa)) the chain is on the periplasmic side. Positions 28–74 (RVWDVDRQLQAQRETNQRLEQRNAGLEAEVRDLKSGNEAVEERARFE) form a coiled coil.

Belongs to the FtsB family. Part of a complex composed of FtsB, FtsL and FtsQ.

The protein localises to the cell inner membrane. Functionally, essential cell division protein. May link together the upstream cell division proteins, which are predominantly cytoplasmic, with the downstream cell division proteins, which are predominantly periplasmic. This chain is Cell division protein FtsB, found in Aromatoleum aromaticum (strain DSM 19018 / LMG 30748 / EbN1) (Azoarcus sp. (strain EbN1)).